The primary structure comprises 123 residues: MKKNFRVKREKDFKAIFKEGTSFANRKFVVYQLENQKNHFRVGLSVSKKLGNAVTRNQIKRRIRHIIQNAKGSLVEDVDFVVIARKGVETLGYAEMEKNLLHVLKLSKIYQEGNGSEKETKVD.

It belongs to the RnpA family. Consists of a catalytic RNA component (M1 or rnpB) and a protein subunit.

It catalyses the reaction Endonucleolytic cleavage of RNA, removing 5'-extranucleotides from tRNA precursor.. RNaseP catalyzes the removal of the 5'-leader sequence from pre-tRNA to produce the mature 5'-terminus. It can also cleave other RNA substrates such as 4.5S RNA. The protein component plays an auxiliary but essential role in vivo by binding to the 5'-leader sequence and broadening the substrate specificity of the ribozyme. This Streptococcus pneumoniae (strain Hungary19A-6) protein is Ribonuclease P protein component.